The primary structure comprises 445 residues: Glycine betaine monooxygenase oxygenase subunit (445 aa).

Residues 73–180 (WLFVGMTCEI…VTHAGGFLFV (108 aa)) form the Rieske domain. Cysteine 115, histidine 117, cysteine 135, and histidine 138 together coordinate [2Fe-2S] cluster. Positions 234 and 239 each coordinate Fe cation.

This sequence belongs to the bacterial ring-hydroxylating dioxygenase alpha subunit family. As to quaternary structure, homotrimer. The system is composed of an oxygenase subunit (BmoA) and a reductase subunit (BmoB). Maximal specific activity is obtained when the ratio of BmoA to BmoB is 5:1. The cofactor is [2Fe-2S] cluster. Fe cation serves as cofactor.

The catalysed reaction is glycine betaine + NADH + O2 + H(+) = N,N-dimethylglycine + formaldehyde + NAD(+) + H2O. Its activity is regulated as follows. Activity is absolutely dependent on the presence of BmoB. Glycine betaine monooxygenase activity is significantly enhanced by Fe(2+) and severely inhibited by heavy-metal ions, including Co(2+), Mn(2+), Zn(2+), Cu(2+) and Ag(+). Severely inhibited by EDTA. Functionally, involved in degradation of glycine betaine. Part of a Rieske-type oxygenase system that catalyzes the conversion of glycine betaine (GB) to dimethylglycine (DMG). This subunit is the terminal oxygenase component of the system. Is specific for GB, and does not show any activity on choline, L-carnitine, stachydrine, dimethylglycine or sarcosine. Activity is strictly dependent on NADH. In Chromohalobacter salexigens (strain ATCC BAA-138 / DSM 3043 / CIP 106854 / NCIMB 13768 / 1H11), this protein is Glycine betaine monooxygenase oxygenase subunit.